The primary structure comprises 89 residues: Small ribosomal subunit protein uS15 (89 aa).

This sequence belongs to the universal ribosomal protein uS15 family. Part of the 30S ribosomal subunit. Forms a bridge to the 50S subunit in the 70S ribosome, contacting the 23S rRNA.

Functionally, one of the primary rRNA binding proteins, it binds directly to 16S rRNA where it helps nucleate assembly of the platform of the 30S subunit by binding and bridging several RNA helices of the 16S rRNA. Its function is as follows. Forms an intersubunit bridge (bridge B4) with the 23S rRNA of the 50S subunit in the ribosome. The chain is Small ribosomal subunit protein uS15 from Chlorobaculum tepidum (strain ATCC 49652 / DSM 12025 / NBRC 103806 / TLS) (Chlorobium tepidum).